Consider the following 132-residue polypeptide: Large ribosomal subunit protein uL14 (132 aa).

Belongs to the universal ribosomal protein uL14 family. In terms of assembly, part of the 50S ribosomal subunit. Forms a cluster with proteins L3 and L24e, part of which may contact the 16S rRNA in 2 intersubunit bridges.

In terms of biological role, binds to 23S rRNA. Forms part of two intersubunit bridges in the 70S ribosome. This chain is Large ribosomal subunit protein uL14, found in Natronomonas pharaonis (strain ATCC 35678 / DSM 2160 / CIP 103997 / JCM 8858 / NBRC 14720 / NCIMB 2260 / Gabara) (Halobacterium pharaonis).